The following is a 560-amino-acid chain: Membrane protein insertase YidC (560 aa).

A helical membrane pass occupies residues Met-1–Leu-21. A disordered region spans residues Val-42–Ala-66. 5 helical membrane passes run Leu-341–Leu-361, Leu-367–Phe-387, Leu-437–Leu-457, Trp-468–Met-488, and Pro-515–Val-535.

This sequence belongs to the OXA1/ALB3/YidC family. Type 1 subfamily. In terms of assembly, interacts with the Sec translocase complex via SecD. Specifically interacts with transmembrane segments of nascent integral membrane proteins during membrane integration.

It is found in the cell inner membrane. In terms of biological role, required for the insertion and/or proper folding and/or complex formation of integral membrane proteins into the membrane. Involved in integration of membrane proteins that insert both dependently and independently of the Sec translocase complex, as well as at least some lipoproteins. Aids folding of multispanning membrane proteins. The protein is Membrane protein insertase YidC of Pseudomonas putida (strain ATCC 47054 / DSM 6125 / CFBP 8728 / NCIMB 11950 / KT2440).